Reading from the N-terminus, the 243-residue chain is MSDEGYRELVESKSAPTTPGPWSPDRERWKRHEAAWKQHCSWSHGLWCHCHDWTRHLKKETRECGSGTESGEDPAVSFDLVDDAAMLAAAGDAEPGAAGGGGVEVPKGPAPTLTTHAIRDLNQYKSQTQPPPLETSYTPGMWMLPELYQPQNSNNSWKDLVTGNRNRNRDPPRPSYLRERRRRSSTTTARRPRAMTSTPETPRKRRRTTRTRAGFERALTSLLEGLGVSEDSDSSSERDCWPF.

2 stretches are compositionally biased toward basic and acidic residues: residues 1-11 and 167-178; these read MSDEGYRELVE and RNRDPPRPSYLR. Disordered stretches follow at residues 1–26 and 146–243; these read MSDE…SPDR and ELYQ…CWPF. Residues 185–200 are compositionally biased toward low complexity; sequence STTTARRPRAMTSTPE.

This is an uncharacterized protein from Canis lupus familiaris (Dog).